The primary structure comprises 94 residues: Co-chaperonin GroES (94 aa).

This sequence belongs to the GroES chaperonin family. As to quaternary structure, heptamer of 7 subunits arranged in a ring. Interacts with the chaperonin GroEL.

It localises to the cytoplasm. In terms of biological role, together with the chaperonin GroEL, plays an essential role in assisting protein folding. The GroEL-GroES system forms a nano-cage that allows encapsulation of the non-native substrate proteins and provides a physical environment optimized to promote and accelerate protein folding. GroES binds to the apical surface of the GroEL ring, thereby capping the opening of the GroEL channel. The chain is Co-chaperonin GroES from Clostridioides difficile (Peptoclostridium difficile).